The sequence spans 461 residues: Fumarate hydratase class II (461 aa).

Substrate contacts are provided by residues 97–99 (SGT), 127–130 (HPND), 137–139 (SSN), and Thr185. His186 serves as the catalytic Proton donor/acceptor. The active site involves Ser316. Substrate is bound by residues Ser317 and 322 to 324 (KVN).

It belongs to the class-II fumarase/aspartase family. Fumarase subfamily. As to quaternary structure, homotetramer.

The protein localises to the cytoplasm. The catalysed reaction is (S)-malate = fumarate + H2O. It participates in carbohydrate metabolism; tricarboxylic acid cycle; (S)-malate from fumarate: step 1/1. Functionally, involved in the TCA cycle. Catalyzes the stereospecific interconversion of fumarate to L-malate. The chain is Fumarate hydratase class II from Staphylococcus aureus (strain MSSA476).